The sequence spans 273 residues: Pyrroline-5-carboxylate reductase (273 aa).

It belongs to the pyrroline-5-carboxylate reductase family.

Its subcellular location is the cytoplasm. The catalysed reaction is L-proline + NADP(+) = (S)-1-pyrroline-5-carboxylate + NADPH + 2 H(+). The enzyme catalyses L-proline + NAD(+) = (S)-1-pyrroline-5-carboxylate + NADH + 2 H(+). Its pathway is amino-acid biosynthesis; L-proline biosynthesis; L-proline from L-glutamate 5-semialdehyde: step 1/1. The protein is Pyrroline-5-carboxylate reductase (PROC) of Pisum sativum (Garden pea).